A 361-amino-acid polypeptide reads, in one-letter code: GDSL esterase/lipase At4g18970 (361 aa).

Positions 1-22 (MARVCVMMMAMAIAMAMNIAMG) are cleaved as a signal peptide. The active-site Nucleophile is the Ser-35. Catalysis depends on residues Asp-325 and His-328.

Belongs to the 'GDSL' lipolytic enzyme family.

Its subcellular location is the secreted. This is GDSL esterase/lipase At4g18970 from Arabidopsis thaliana (Mouse-ear cress).